A 328-amino-acid chain; its full sequence is Nickel import system permease protein NikB (328 aa).

The next 6 helical transmembrane spans lie at L11–L31, L104–I124, V139–I159, I170–I190, I229–V249, and V279–L299. In terms of domain architecture, ABC transmembrane type-1 spans A100–T297.

The protein belongs to the binding-protein-dependent transport system permease family. OppBC subfamily. The complex is composed of two ATP-binding proteins (NikD and NikE), two transmembrane proteins (NikB and NikC) and a solute-binding protein (NikA).

The protein resides in the cell membrane. In terms of biological role, part of the ABC transporter complex NikABCDE (Opp2) involved in nickel import. Probably responsible for the translocation of the substrate across the membrane. The polypeptide is Nickel import system permease protein NikB (Staphylococcus aureus (strain MSSA476)).